Reading from the N-terminus, the 432-residue chain is Cytochrome c biogenesis protein CcsB (432 aa).

3 consecutive transmembrane segments (helical) span residues 18–38 (LRLA…GTGI), 76–96 (SGWF…CSWR), and 166–186 (VGPL…AWGA).

It belongs to the Ccs1/CcsB family. In terms of assembly, may interact with CcsA.

It localises to the cellular thylakoid membrane. In terms of biological role, required during biogenesis of c-type cytochromes (cytochrome c6 and cytochrome f) at the step of heme attachment. The sequence is that of Cytochrome c biogenesis protein CcsB from Synechococcus sp. (strain CC9605).